A 367-amino-acid polypeptide reads, in one-letter code: Zinc transport system membrane protein TroD (367 aa).

The next 9 helical transmembrane spans lie at 5 to 25 (VVLI…FLVL), 28 to 48 (ISLM…LGYF), 56 to 76 (FVPF…AELL), 87 to 107 (AVGL…SLYA), 140 to 160 (SLVQ…LFFK), 170 to 190 (VLAT…MLAV), 201 to 221 (VGAV…LLLT), 224 to 244 (LLLM…SGLF), and 251 to 271 (GSIA…VYLF).

This sequence belongs to the ABC-3 integral membrane protein family.

The protein resides in the cell membrane. Part of an ATP-driven transport system TroABCD for zinc. In Treponema pallidum (strain Nichols), this protein is Zinc transport system membrane protein TroD (troD).